A 124-amino-acid polypeptide reads, in one-letter code: Galanin peptides (124 aa).

Positions 1–19 (MARGSVILLAWLLLVATLS) are cleaved as a signal peptide. Residues 20–30 (ATLGLGMPTKE) constitute a propeptide that is removed on maturation. Threonine 61 carries the post-translational modification Threonine amide. Residues serine 117 and serine 118 each carry the phosphoserine modification.

This sequence belongs to the galanin family.

The protein localises to the secreted. Functionally, endocrine hormone of the central and peripheral nervous systems that binds and activates the G protein-coupled receptors GALR1, GALR2, and GALR3. This small neuropeptide may regulate diverse physiologic functions including contraction of smooth muscle of the gastrointestinal and genitourinary tract, growth hormone and insulin release and adrenal secretion. The sequence is that of Galanin peptides (Gal) from Rattus norvegicus (Rat).